The primary structure comprises 385 residues: Aryl-alcohol dehydrogenase [NADP(+)] (385 aa).

The active-site Proton donor is the Y76. 238–248 contacts NADP(+); that stretch reads NVLCAGKIRTD.

Belongs to the aldo/keto reductase family. Aldo/keto reductase 2 subfamily. In terms of processing, the N-terminus is blocked.

The enzyme catalyses an aromatic primary alcohol + NADP(+) = an aromatic aldehyde + NADPH + H(+). In Phanerodontia chrysosporium (White-rot fungus), this protein is Aryl-alcohol dehydrogenase [NADP(+)].